An 88-amino-acid polypeptide reads, in one-letter code: Gas vesicle protein A2 (88 aa).

Belongs to the gas vesicle GvpA family. The gas vesicle shell is 2 nm thick and consists of a single layer of this protein. It forms helical ribs nearly perpendicular to the long axis of the vesicle.

It is found in the gas vesicle shell. Its function is as follows. Gas vesicles are hollow, gas filled proteinaceous nanostructures found in some microorganisms. During planktonic growth they allow positioning of the organism at a favorable depth for light or nutrient acquisition. GvpA forms the protein shell. Functionally, it is not clear if the 2 type A proteins in this organism are functionally redundant. In terms of biological role, when a minimal gvp locus (gvpA2-gvpR-gvpN-gvpF-gvpG-gvpL-gvpS-gvpK-gvpJ-gvpT-gvpU, called pNL29) is expressed in E.coli gas vesicles are made. In Priestia megaterium (Bacillus megaterium), this protein is Gas vesicle protein A2.